A 218-amino-acid chain; its full sequence is Ras-related protein RABE1e (218 aa).

22-29 (GDSGVGKS) serves as a coordination point for GTP. The short motif at 44-52 (FITTIGIDF) is the Effector region element. GTP contacts are provided by residues 70–74 (DTAGQ), 128–131 (NKAD), and 159–160 (SA). Residues 182–218 (TESDTKAEPQGIKITKQDANKASSSSTNEKSACCSYV) form a disordered region. The span at 201-211 (NKASSSSTNEK) shows a compositional bias: polar residues. 2 S-geranylgeranyl cysteine lipidation sites follow: C214 and C215.

It belongs to the small GTPase superfamily. Rab family. In terms of assembly, interacts with PI5K2.

The protein resides in the golgi apparatus membrane. It is found in the cell membrane. Functionally, involved in membrane trafficking from the Golgi to the plasma membrane. The chain is Ras-related protein RABE1e (RABE1E) from Arabidopsis thaliana (Mouse-ear cress).